Reading from the N-terminus, the 687-residue chain is Protein Smaug homolog 2 (687 aa).

Residues 160-172 show a composition bias toward basic and acidic residues; that stretch reads TRPEPSYHSRQGS. Positions 160-301 are disordered; that stretch reads TRPEPSYHSR…NTFQEDGSGM (142 aa). S172 is modified (phosphoserine). 2 stretches are compositionally biased toward low complexity: residues 175–190 and 200–211; these read WGGP…GPGW and HVPFHPSSSVPP. A compositionally biased stretch (polar residues) spans 215-224; it reads SIGSNANTGL. S271, S278, S279, and S281 each carry phosphoserine. Residues 278-290 show a composition bias toward low complexity; it reads SSGSEQTEEQGSS. Residues 299-372 form the SAM domain; it reads SGMKDVPSWL…LKSLEKDVLE (74 aa). T400 carries the phosphothreonine modification. Positions 402–464 are disordered; it reads TAKDEGRGEP…APAPVADGDI (63 aa). A compositionally biased stretch (basic and acidic residues) spans 424–435; it reads GSDKGTEAKDPP. Positions 448–461 are enriched in low complexity; the sequence is PSDSSEPAPAPVAD. S548, S550, S556, S585, and S593 each carry phosphoserine. At R595 the chain carries Asymmetric dimethylarginine. The tract at residues 600-636 is disordered; sequence SPSLGGQGRQNLWFANPGGSNSMPSQSRSSVQRTHSL. Residues 617 to 636 are compositionally biased toward polar residues; sequence GGSNSMPSQSRSSVQRTHSL. The residue at position 621 (S621) is a Phosphoserine.

This sequence belongs to the SMAUG family.

The protein localises to the cytoplasm. Its subcellular location is the nucleus. Functionally, has transcriptional repressor activity. Overexpression inhibits the transcriptional activities of AP-1, p53/TP53 and CDKN1A. This chain is Protein Smaug homolog 2 (Samd4b), found in Mus musculus (Mouse).